We begin with the raw amino-acid sequence, 70 residues long: Alpha-elapitoxin-Ast2a (70 aa).

Intrachain disulfides connect cysteine 3/cysteine 20, cysteine 13/cysteine 41, cysteine 26/cysteine 30, cysteine 45/cysteine 56, and cysteine 57/cysteine 62. Serine amide is present on serine 70.

Belongs to the three-finger toxin family. Long-chain subfamily. Type II alpha-neurotoxin sub-subfamily. In terms of tissue distribution, expressed by the venom gland.

Its subcellular location is the secreted. Functionally, binds with high affinity to muscular (alpha-1/CHRNA1) and neuronal (alpha-7/CHRNA7) nicotinic acetylcholine receptor (nAChR) and inhibits acetylcholine from binding to the receptor, thereby impairing neuromuscular and neuronal transmission. The sequence is that of Alpha-elapitoxin-Ast2a from Hydrophis stokesii (Stokes's sea snake).